The chain runs to 808 residues: MLIVRKPKKKKDEIEIVKVGGKIEDGIEVKNNQKIFANYKKVGDKYKLYRCRVGDKLIQPSKVLELLKSDKIFILKENEEEIEEVLKSYNLKFDYIELCPFCLLKNIYKRLTRNNRCRYGNLEICINCGINEIKEEVKISEEFIEKFLKRFKDVDKVLSLLRIRNPLDKPELTRYDIITGSEEDKIENYKIDELDIPEELKEIIKSRGIEELLPVQTLSVKAGLLNGDDLLIISATSSGKTLIGELAGIKNLIKTGKKFLFLVPLVALANQKYLEFKERYEKLGFKVSLRVGLGRIGKKVDVETSLDADIIVGTYEGIDYLIRTKRLKDIGTVVIDEIHSLNLEERGARLDGLIGRLRFLFKEAQKIYLSATIGNPKELAKQLNAKLVLYNGRPVPLERHIIFCKNDFAKLNIIKEIVKREWQNISKFGYRGQCLIFTYSRKRAEYLAKALKSKGIKAEFYHGGMEYIKRRKVEDDFANQKIQCVVTTAALSAGVDFPASTVILESLAMGADWLNPAEFQQMCGRAGRKGMHEIGKVYLLVEIGKKYHAKMENTEDEVAFKLLNAVPEDVKVEYNEDEEEEQILATISAGITNRYDIDRVPYIGRAFSLNKILSNLESYGMIKANNDVKLTNYGSAVAISFLYPKVAEKIKEGIIENKEIIKLITEIMPFENVYLSNNLKIKLSKILNINVPSRFFDALEVIREGMEKIKDKKLKEDLTLIIMEFEGVEVEEKILEMIINLRISGKTPGQISKTLYEEFKIQTYSGDIYYYLEQLLNLLDATERIARIFNKRYAEKVKELKEKIENPK.

The Q motif motif lies at 189-217 (YKIDELDIPEELKEIIKSRGIEELLPVQT). Residues 221–391 (KAGLLNGDDL…QLNAKLVLYN (171 aa)) form the Helicase ATP-binding domain. 234 to 241 (SATSSGKT) serves as a coordination point for ATP. Positions 336–339 (DEIH) match the DEIH box motif. A Helicase C-terminal domain is found at 396–585 (PLERHIIFCK…EDEEEEQILA (190 aa)).

The protein belongs to the DEAD box helicase family.

The protein is Probable ATP-dependent helicase MJ1401 of Methanocaldococcus jannaschii (strain ATCC 43067 / DSM 2661 / JAL-1 / JCM 10045 / NBRC 100440) (Methanococcus jannaschii).